The following is a 180-amino-acid chain: Probable chorismate pyruvate-lyase (180 aa).

Residues Arg-82, Leu-120, and Glu-165 each coordinate substrate.

This sequence belongs to the UbiC family.

It localises to the cytoplasm. The catalysed reaction is chorismate = 4-hydroxybenzoate + pyruvate. Its pathway is cofactor biosynthesis; ubiquinone biosynthesis. Its function is as follows. Removes the pyruvyl group from chorismate, with concomitant aromatization of the ring, to provide 4-hydroxybenzoate (4HB) for the ubiquinone pathway. This Photobacterium profundum (strain SS9) protein is Probable chorismate pyruvate-lyase.